Reading from the N-terminus, the 367-residue chain is DNA replication and repair protein RecF (367 aa).

30–37 serves as a coordination point for ATP; it reads GSNGSGKT.

This sequence belongs to the RecF family.

It is found in the cytoplasm. Its function is as follows. The RecF protein is involved in DNA metabolism; it is required for DNA replication and normal SOS inducibility. RecF binds preferentially to single-stranded, linear DNA. It also seems to bind ATP. The chain is DNA replication and repair protein RecF from Pseudomonas putida (strain ATCC 700007 / DSM 6899 / JCM 31910 / BCRC 17059 / LMG 24140 / F1).